Consider the following 93-residue polypeptide: U12-lycotoxin-Ls1a (93 aa).

The signal sequence occupies residues 1–18 (MKFAVILLFSLVVLTVAS). The propeptide occupies 19 to 38 (ESVEEVRREIDIEDLPEQQR).

It belongs to the neurotoxin 31 family. Post-translationally, contains 5 disulfide bonds. Expressed by the venom gland.

It localises to the secreted. The polypeptide is U12-lycotoxin-Ls1a (Lycosa singoriensis (Wolf spider)).